The sequence spans 142 residues: MKTFTAKLENIRRNWYIMDASNKILGRFASNIALRLRGKHKVIYTPHIDTGDYIIVLNAKKITVTGNKLSDKKYYHYTGFVGGIKEQNLKDLMTKRPEYVIERAVKGMLPKGALGKAMLKKLKVYAGTEHQHAAQQPQVLEI.

The protein belongs to the universal ribosomal protein uL13 family. As to quaternary structure, part of the 50S ribosomal subunit.

This protein is one of the early assembly proteins of the 50S ribosomal subunit, although it is not seen to bind rRNA by itself. It is important during the early stages of 50S assembly. In Baumannia cicadellinicola subsp. Homalodisca coagulata, this protein is Large ribosomal subunit protein uL13.